The following is a 421-amino-acid chain: Gamma-glutamyl phosphate reductase (421 aa).

This sequence belongs to the gamma-glutamyl phosphate reductase family.

It is found in the cytoplasm. The enzyme catalyses L-glutamate 5-semialdehyde + phosphate + NADP(+) = L-glutamyl 5-phosphate + NADPH + H(+). The protein operates within amino-acid biosynthesis; L-proline biosynthesis; L-glutamate 5-semialdehyde from L-glutamate: step 2/2. Functionally, catalyzes the NADPH-dependent reduction of L-glutamate 5-phosphate into L-glutamate 5-semialdehyde and phosphate. The product spontaneously undergoes cyclization to form 1-pyrroline-5-carboxylate. This Pseudomonas syringae pv. tomato (strain ATCC BAA-871 / DC3000) protein is Gamma-glutamyl phosphate reductase.